The sequence spans 428 residues: D-amino acid dehydrogenase (428 aa).

3–17 contacts FAD; that stretch reads VVILGSGVVGVASAY.

The protein belongs to the DadA oxidoreductase family. It depends on FAD as a cofactor.

It carries out the reaction a D-alpha-amino acid + A + H2O = a 2-oxocarboxylate + AH2 + NH4(+). It participates in amino-acid degradation; D-alanine degradation; NH(3) and pyruvate from D-alanine: step 1/1. Oxidative deamination of D-amino acids. The polypeptide is D-amino acid dehydrogenase (Burkholderia pseudomallei (strain K96243)).